We begin with the raw amino-acid sequence, 60 residues long: MTETITFTLVKSGIGSTDKIRATLTGLGLTKLNKTVTRKDTPEIRGMLNKVKHLVRIDEA.

It belongs to the universal ribosomal protein uL30 family. In terms of assembly, part of the 50S ribosomal subunit.

The chain is Large ribosomal subunit protein uL30 from Desulfotalea psychrophila (strain LSv54 / DSM 12343).